Consider the following 153-residue polypeptide: Ribosome maturation factor RimP (153 aa).

Belongs to the RimP family.

Its subcellular location is the cytoplasm. Its function is as follows. Required for maturation of 30S ribosomal subunits. The sequence is that of Ribosome maturation factor RimP from Desulforamulus reducens (strain ATCC BAA-1160 / DSM 100696 / MI-1) (Desulfotomaculum reducens).